The sequence spans 224 residues: Ribosomal RNA large subunit methyltransferase E (224 aa).

Residues Gly64, Trp66, Asp97, Asp113, and Asp138 each contribute to the S-adenosyl-L-methionine site. Lys178 (proton acceptor) is an active-site residue.

It belongs to the class I-like SAM-binding methyltransferase superfamily. RNA methyltransferase RlmE family.

The protein resides in the cytoplasm. The enzyme catalyses uridine(2552) in 23S rRNA + S-adenosyl-L-methionine = 2'-O-methyluridine(2552) in 23S rRNA + S-adenosyl-L-homocysteine + H(+). In terms of biological role, specifically methylates the uridine in position 2552 of 23S rRNA at the 2'-O position of the ribose in the fully assembled 50S ribosomal subunit. This chain is Ribosomal RNA large subunit methyltransferase E, found in Methylibium petroleiphilum (strain ATCC BAA-1232 / LMG 22953 / PM1).